Consider the following 209-residue polypeptide: Max dimerization protein 4 (209 aa).

The segment at 6-23 (LLLLLEAAEYLERRDREA) is interaction with SIN3A and SIN3B. One can recognise a bHLH domain in the interval 53 to 105 (NNRSSHNELEKHRRAKLRLYLEQLKQLGPLGPDSTRHTTLSLLKRAKMHIKKL). Residues 137–209 (SVERVRTDST…CRRPGCPGLS (73 aa)) are disordered. Positions 153–163 (DDSEQEVDIEG) are enriched in acidic residues. Polar residues predominate over residues 185–195 (SLQSSGCSDSS).

As to quaternary structure, efficient DNA binding requires dimerization with another bHLH protein. Binds DNA as a heterodimer with MAX. Interacts with SIN3A AND SIN3B. Interacts with RNF17.

It is found in the nucleus. Transcriptional repressor. Binds with MAX to form a sequence-specific DNA-binding protein complex which recognizes the core sequence 5'-CAC[GA]TG-3'. Antagonizes MYC transcriptional activity by competing for MAX and suppresses MYC dependent cell transformation. The sequence is that of Max dimerization protein 4 (Mxd4) from Mus musculus (Mouse).